The primary structure comprises 393 residues: Serine/threonine-protein kinase US3 homolog (393 aa).

The region spanning 93–378 (FVILKTFTPG…AEVLLNHSVF (286 aa)) is the Protein kinase domain. ATP is bound by residues 99 to 107 (FTPGAEGFA) and Lys-122. Residue Asp-206 is the Proton acceptor of the active site.

It belongs to the protein kinase superfamily. Ser/Thr protein kinase family. In terms of processing, phosphorylated by ORF47; this phosphorylation regulates subsequent phosphorylation of proteins 24 and 27 by ORF66. Autophosphorylated.

It is found in the host cytoplasm. It localises to the host nucleus. It catalyses the reaction L-seryl-[protein] + ATP = O-phospho-L-seryl-[protein] + ADP + H(+). The catalysed reaction is L-threonyl-[protein] + ATP = O-phospho-L-threonyl-[protein] + ADP + H(+). Multifunctional serine/threonine kinase that plays a role in several processes including egress of virus particles from the nucleus, modulation of the actin cytoskeleton and inhibition of apoptosis. Phosphorylates proteins 24 and 27, two critical regulators of capsid budding from nucleus to endoplasmic reticulum, thereby facilitating virion egress. Modulates and redistributes host components of the nuclear envelope, including LMNA, emerin/EMD and the nuclear matrix protein MATR3. Phosphorylates envelope glycoprotein B (gB), probably to direct it to the cell surface. Promotes virus intracellular spread by restructuring host cell cytoskeleton. Blocks host apoptosis to extend cell survival and allow efficient viral replication. Promotes viral gene expression by phosphorylating host HDAC2 to reduce viral genome silencing. Down-regulates class I major histocompatibility complex (MHC-I) surface expression. Additionally, phosphorylates IE62 and targets it to the cytoplasm. The nuclear exclusion of IE62 enables the packaging of abundant levels of IE62 into virions. The polypeptide is Serine/threonine-protein kinase US3 homolog (66) (Varicella-zoster virus (strain Dumas) (HHV-3)).